A 463-amino-acid chain; its full sequence is Asparagine--tRNA ligase (463 aa).

The protein belongs to the class-II aminoacyl-tRNA synthetase family. Homodimer.

The protein resides in the cytoplasm. It catalyses the reaction tRNA(Asn) + L-asparagine + ATP = L-asparaginyl-tRNA(Asn) + AMP + diphosphate + H(+). This chain is Asparagine--tRNA ligase, found in Bacillus cytotoxicus (strain DSM 22905 / CIP 110041 / 391-98 / NVH 391-98).